Reading from the N-terminus, the 152-residue chain is Nucleoside diphosphate kinase B (152 aa).

The interval 1 to 66 is interaction with AKAP13; it reads MANLERTFIA…DRPFFPGLVK (66 aa). ATP contacts are provided by Lys-12, Phe-60, Arg-88, Thr-94, Arg-105, and Asn-115. His-118 functions as the Pros-phosphohistidine intermediate in the catalytic mechanism.

It belongs to the NDK family. As to quaternary structure, hexamer of two different chains: An and B (A6, A5B, A4B2, A3B3, A2B4, AB5, B6). Interacts with CAPN8. Interacts with AKAP13. Interacts with ITGB1BP1 (via C-terminal domain region). Interacts with BCL2L10. Mg(2+) serves as cofactor. In terms of processing, the N-terminus is blocked.

The protein localises to the cytoplasm. The protein resides in the cell projection. It localises to the lamellipodium. It is found in the ruffle. Its subcellular location is the nucleus. It carries out the reaction a 2'-deoxyribonucleoside 5'-diphosphate + ATP = a 2'-deoxyribonucleoside 5'-triphosphate + ADP. It catalyses the reaction a ribonucleoside 5'-diphosphate + ATP = a ribonucleoside 5'-triphosphate + ADP. The enzyme catalyses ATP + protein L-histidine = ADP + protein N-phospho-L-histidine.. In terms of biological role, major role in the synthesis of nucleoside triphosphates other than ATP. The ATP gamma phosphate is transferred to the NDP beta phosphate via a ping-pong mechanism, using a phosphorylated active-site intermediate. Negatively regulates Rho activity by interacting with AKAP13/LBC. Acts as a transcriptional activator of the MYC gene; binds DNA non-specifically. Binds to both single-stranded guanine- and cytosine-rich strands within the nuclease hypersensitive element (NHE) III(1) region of the MYC gene promoter. Does not bind to duplex NHE III(1). Has G-quadruplex (G4) DNA-binding activity, which is independent of its nucleotide-binding and kinase activity. Binds both folded and unfolded G4 with similar low nanomolar affinities. Stabilizes folded G4s regardless of whether they are prefolded or not. Exhibits histidine protein kinase activity. This is Nucleoside diphosphate kinase B (Nme2) from Rattus norvegicus (Rat).